A 300-amino-acid chain; its full sequence is Transcription factor E2F5 (300 aa).

A DNA-binding region spans residues 2–73 (GSSRHEKSLG…KNSIQWKGVG (72 aa)). The segment at 31 to 53 (LKAAADTLAVRQKRRIYDITNVL) is leucine-zipper. The DEF box motif lies at 36 to 73 (DTLAVRQKRRIYDITNVLEGIDLIEKKSKNSIQWKGVG). Positions 74-170 (AGCNTKEVID…GQNGQKKYQI (97 aa)) are dimerization. Residues 191–250 (SKPVVFPVPPPDDLTQPSSQSSTSVTPPKSTMAAQNLPEQHVSERSQNFQQTPATEISSG) are disordered. The span at 203–221 (DLTQPSSQSSTSVTPPKST) shows a compositional bias: low complexity. Over residues 235-246 (RSQNFQQTPATE) the composition is skewed to polar residues. A transactivation region spans residues 242-300 (TPATEISSGSISGDIIDELMSSDVFPLLRLSPTPADDYNFNLDDNEGVCDLFDVQILNY). The interval 277–294 (DDYNFNLDDNEGVCDLFD) is RBL2 association.

This sequence belongs to the E2F/DP family. In terms of assembly, component of the DRTF1/E2F transcription factor complex. Binds cooperatively with DP-1 to E2F sites. Interaction with retinoblastoma protein RB1 or proteins RBL1 and RBL2 inhibits the E2F transactivation domain. Component of the DREAM complex (also named LINC complex) at least composed of E2F4, E2F5, LIN9, LIN37, LIN52, LIN54, MYBL1, MYBL2, RBL1, RBL2, RBBP4, TFDP1 and TFDP2. The complex exists in quiescent cells where it represses cell cycle-dependent genes. It dissociates in S phase when LIN9, LIN37, LIN52 and LIN54 form a subcomplex that binds to MYBL2. Found in placenta followed by kidney, lung and brain.

The protein localises to the nucleus. Functionally, transcriptional activator that binds to E2F sites, these sites are present in the promoter of many genes whose products are involved in cell proliferation. May mediate growth factor-initiated signal transduction. It is likely involved in the early responses of resting cells to growth factor stimulation. Specifically required for multiciliate cell differentiation: together with MCIDAS and E2F5, binds and activate genes required for centriole biogenesis. This is Transcription factor E2F5 (E2f5) from Rattus norvegicus (Rat).